We begin with the raw amino-acid sequence, 164 residues long: Biotin carboxyl carrier protein of acetyl-CoA carboxylase (164 aa).

The Biotinyl-binding domain occupies 86–162; the sequence is GDFIVSPLVG…QFGSKLFRIV (77 aa). Lys128 is subject to N6-biotinyllysine.

Homodimer.

The protein operates within lipid metabolism; fatty acid biosynthesis. This protein is a component of the acetyl coenzyme A carboxylase complex; first, biotin carboxylase catalyzes the carboxylation of the carrier protein and then the transcarboxylase transfers the carboxyl group to form malonyl-CoA. The sequence is that of Biotin carboxyl carrier protein of acetyl-CoA carboxylase (accB) from Chlamydia trachomatis serovar D (strain ATCC VR-885 / DSM 19411 / UW-3/Cx).